A 230-amino-acid chain; its full sequence is MEDKLDRYYTNVLSNAEKDKHTTVDSDDKSSGEENLDELLNELDRELDEDHEFLSAYRSERLQQISDHLKQVKKNVEDDGYGRLQCIDNEADAIQICTKTTMVVIHFELETFGKCQYMNEKLENLAKRYLTTRFIKVNVQTCPFLVNKLNIKVLPFVVGYKNGLEKVRYVGFSKLGNDPNGFDIRRLEQSLAHSGVIEDTFEIRKHSSVNTERFASTNHDRSESDSDLDI.

Met-1 is subject to N-acetylmethionine. The Phosducin domain maps to 16-166; sequence AEKDKHTTVD…VVGYKNGLEK (151 aa). A coiled-coil region spans residues 25-79; that stretch reads DSDDKSSGEENLDELLNELDRELDEDHEFLSAYRSERLQQISDHLKQVKKNVEDD. Residues 81–230 are thioredoxin fold; the sequence is YGRLQCIDNE…RSESDSDLDI (150 aa).

Belongs to the phosducin family. Interacts with the G protein beta-gamma subunit complex (STE4-STE18 complex).

The protein localises to the cytoplasm. Not essential for growth. Inhibits early G-protein signaling events following pheromone stimulation. May help create heterodimerizable beta-tubulin by facilitating the efficient transfer of nascent beta-tubulin polypeptides to the folding apparatus. The protein is Phosducin-like protein 1 (PLP1) of Saccharomyces cerevisiae (strain ATCC 204508 / S288c) (Baker's yeast).